We begin with the raw amino-acid sequence, 360 residues long: Chorismate synthase (360 aa).

NADP(+) is bound at residue arginine 48. FMN contacts are provided by residues 125-127, 242-243, glycine 286, 301-305, and arginine 327; these read RSS, NA, and KPTSS.

It belongs to the chorismate synthase family. In terms of assembly, homotetramer. Requires FMNH2 as cofactor.

It carries out the reaction 5-O-(1-carboxyvinyl)-3-phosphoshikimate = chorismate + phosphate. Its pathway is metabolic intermediate biosynthesis; chorismate biosynthesis; chorismate from D-erythrose 4-phosphate and phosphoenolpyruvate: step 7/7. Functionally, catalyzes the anti-1,4-elimination of the C-3 phosphate and the C-6 proR hydrogen from 5-enolpyruvylshikimate-3-phosphate (EPSP) to yield chorismate, which is the branch point compound that serves as the starting substrate for the three terminal pathways of aromatic amino acid biosynthesis. This reaction introduces a second double bond into the aromatic ring system. The sequence is that of Chorismate synthase from Pelagibacter ubique (strain HTCC1062).